Reading from the N-terminus, the 881-residue chain is Alanine--tRNA ligase (881 aa).

4 residues coordinate Zn(2+): His564, His568, Cys666, and His670.

Belongs to the class-II aminoacyl-tRNA synthetase family. The cofactor is Zn(2+).

Its subcellular location is the cytoplasm. It carries out the reaction tRNA(Ala) + L-alanine + ATP = L-alanyl-tRNA(Ala) + AMP + diphosphate. Its function is as follows. Catalyzes the attachment of alanine to tRNA(Ala) in a two-step reaction: alanine is first activated by ATP to form Ala-AMP and then transferred to the acceptor end of tRNA(Ala). Also edits incorrectly charged Ser-tRNA(Ala) and Gly-tRNA(Ala) via its editing domain. This is Alanine--tRNA ligase from Caldicellulosiruptor saccharolyticus (strain ATCC 43494 / DSM 8903 / Tp8T 6331).